The primary structure comprises 143 residues: Cytochrome c-type biogenesis protein CcmE (143 aa).

Residues 1-8 (MTPVRRRK) are Cytoplasmic-facing. Residues 9–29 (LFILLFALSVLSAAAALVLYA) traverse the membrane as a helical; Signal-anchor for type II membrane protein segment. Residues 30–143 (LRQNISLFYT…KSALADKVKQ (114 aa)) lie on the Periplasmic side of the membrane. Residues H124 and Y128 each contribute to the heme site.

The protein belongs to the CcmE/CycJ family.

The protein resides in the cell inner membrane. Its function is as follows. Heme chaperone required for the biogenesis of c-type cytochromes. Transiently binds heme delivered by CcmC and transfers the heme to apo-cytochromes in a process facilitated by CcmF and CcmH. The chain is Cytochrome c-type biogenesis protein CcmE from Legionella pneumophila (strain Lens).